The chain runs to 393 residues: Lipid-A-disaccharide synthase (393 aa).

It belongs to the LpxB family.

It carries out the reaction a lipid X + a UDP-2-N,3-O-bis[(3R)-3-hydroxyacyl]-alpha-D-glucosamine = a lipid A disaccharide + UDP + H(+). The protein operates within bacterial outer membrane biogenesis; LPS lipid A biosynthesis. In terms of biological role, condensation of UDP-2,3-diacylglucosamine and 2,3-diacylglucosamine-1-phosphate to form lipid A disaccharide, a precursor of lipid A, a phosphorylated glycolipid that anchors the lipopolysaccharide to the outer membrane of the cell. This is Lipid-A-disaccharide synthase from Granulibacter bethesdensis (strain ATCC BAA-1260 / CGDNIH1).